The primary structure comprises 1305 residues: Rho GTPase-activating protein 33 (1305 aa).

The disordered stretch occupies residues 1-64 (MLQAQKQSDP…KPGKRLSAPR (64 aa)). A Phosphoserine modification is found at serine 32. Residues 83–192 (FGHIQLLLSP…CGPVLTWMEL (110 aa)) form the PX; atypical domain. One can recognise an SH3 domain in the interval 210-272 (PAVAAAHVVK…PSECVELFTE (63 aa)). The Rho-GAP domain occupies 339 to 534 (CDLGEHLSNS…FLLTHVEVLF (196 aa)). Disordered stretches follow at residues 575 to 818 (RTQG…LDIS), 864 to 1054 (LSDT…SFFS), and 1115 to 1305 (SYSG…RSYC). Positions 582-595 (TPTEPTTPKTPASP) are enriched in low complexity. Phosphoserine is present on serine 594. Over residues 596 to 608 (VERRKRERAEKQR) the composition is skewed to basic and acidic residues. The segment covering 646–669 (SGSRPDTVTLRSAKSEESLSSQAS) has biased composition (polar residues). Serine 660 carries the post-translational modification Phosphoserine. Residues 694–733 (APAGSCESLSSSSSSSSSSSSSSSSESSAGGLGPLSGSPS) are compositionally biased toward low complexity. At serine 749 the chain carries Phosphoserine. Residues 774-786 (PGDPAPPASPAPP) show a composition bias toward pro residues. Residues 787-798 (ASASAFPPRATP) are compositionally biased toward low complexity. Positions 864-873 (LSDTCQQEIS) are enriched in polar residues. Positions 895-915 (LLPPPLPLLRPGGAPPPPPKN) are enriched in pro residues. Low complexity predominate over residues 916 to 940 (PARLMALALAERAQQVAEQQSQQEQ). Composition is skewed to polar residues over residues 992-1020 (RQQSDGSLVRSQRPLGTSRRSPRGPSQVS), 1039-1054 (SPCSVPSQGSNPSFFS), and 1115-1125 (SYSGPSRSWSP). Phosphotyrosine is present on tyrosine 1188. Positions 1194 to 1208 (GPRGPSPASSSSSSP) are enriched in low complexity. An Omega-N-methylarginine modification is found at arginine 1263. Positions 1292 to 1305 (SWSLHSEGQTRSYC) are enriched in polar residues.

This sequence belongs to the PX domain-containing GAP family. In terms of assembly, specifically interacts with CDC42 and RHOQ/TC10 through its Rho-GAP domain. Interacts with NEK6. In terms of tissue distribution, highly expressed in brain and testis. Also expressed in white adipose tissue (WAT) and muscle at a low level.

It localises to the cell membrane. Its function is as follows. May be involved in several stages of intracellular trafficking. Could play an important role in the regulation of glucose transport by insulin. May act as a downstream effector of RHOQ/TC10 in the regulation of insulin-stimulated glucose transport. The protein is Rho GTPase-activating protein 33 (Arhgap33) of Mus musculus (Mouse).